We begin with the raw amino-acid sequence, 68 residues long: Palustrin-1c (68 aa).

An N-terminal signal peptide occupies residues 1 to 22 (MFTMKKSLLLLFFLGTISLSLC). The propeptide occupies 23-39 (EEERGADEEEGDGEKLT). Cys-62 and Cys-68 are joined by a disulfide.

As to expression, expressed by the skin glands.

It is found in the secreted. Functionally, antimicrobial peptide. The chain is Palustrin-1c from Odorrana versabilis (Chinese bamboo leaf odorous frog).